Here is a 456-residue protein sequence, read N- to C-terminus: Bifunctional protein GlmU (456 aa).

The pyrophosphorylase stretch occupies residues 1 to 229 (MSNSAMSVVI…LSEVEGVNNR (229 aa)). UDP-N-acetyl-alpha-D-glucosamine is bound by residues 11 to 14 (LAAG), Lys-25, Gln-76, 81 to 82 (GT), 103 to 105 (YGD), Gly-140, Glu-154, Asn-169, and Asn-227. Asp-105 serves as a coordination point for Mg(2+). Mg(2+) is bound at residue Asn-227. The interval 230-250 (LQLARLERVYQAEQAEKLLLA) is linker. The interval 251 to 456 (GVMLRDPARF…QGWQRPVKKK (206 aa)) is N-acetyltransferase. Positions 333 and 351 each coordinate UDP-N-acetyl-alpha-D-glucosamine. Residue His-363 is the Proton acceptor of the active site. UDP-N-acetyl-alpha-D-glucosamine is bound by residues Tyr-366 and Asn-377. Acetyl-CoA is bound by residues Ala-380, 386–387 (NY), Ser-405, Ala-423, and Arg-440.

In the N-terminal section; belongs to the N-acetylglucosamine-1-phosphate uridyltransferase family. It in the C-terminal section; belongs to the transferase hexapeptide repeat family. As to quaternary structure, homotrimer. Mg(2+) serves as cofactor.

The protein localises to the cytoplasm. The enzyme catalyses alpha-D-glucosamine 1-phosphate + acetyl-CoA = N-acetyl-alpha-D-glucosamine 1-phosphate + CoA + H(+). It carries out the reaction N-acetyl-alpha-D-glucosamine 1-phosphate + UTP + H(+) = UDP-N-acetyl-alpha-D-glucosamine + diphosphate. It participates in nucleotide-sugar biosynthesis; UDP-N-acetyl-alpha-D-glucosamine biosynthesis; N-acetyl-alpha-D-glucosamine 1-phosphate from alpha-D-glucosamine 6-phosphate (route II): step 2/2. It functions in the pathway nucleotide-sugar biosynthesis; UDP-N-acetyl-alpha-D-glucosamine biosynthesis; UDP-N-acetyl-alpha-D-glucosamine from N-acetyl-alpha-D-glucosamine 1-phosphate: step 1/1. The protein operates within bacterial outer membrane biogenesis; LPS lipid A biosynthesis. In terms of biological role, catalyzes the last two sequential reactions in the de novo biosynthetic pathway for UDP-N-acetylglucosamine (UDP-GlcNAc). The C-terminal domain catalyzes the transfer of acetyl group from acetyl coenzyme A to glucosamine-1-phosphate (GlcN-1-P) to produce N-acetylglucosamine-1-phosphate (GlcNAc-1-P), which is converted into UDP-GlcNAc by the transfer of uridine 5-monophosphate (from uridine 5-triphosphate), a reaction catalyzed by the N-terminal domain. The protein is Bifunctional protein GlmU of Klebsiella pneumoniae subsp. pneumoniae (strain ATCC 700721 / MGH 78578).